The following is a 427-amino-acid chain: G2/mitotic-specific cyclin-3 (427 aa).

Residues 1–12 (MHHNSQSLSSGH) are compositionally biased toward polar residues. Disordered stretches follow at residues 1–29 (MHHN…NLKH) and 89–126 (SVAQ…EDQE). A compositionally biased stretch (basic and acidic residues) spans 89–105 (SVAQRKEADHNDLLTDR). The span at 106–126 (EQEEPVEDDGESEEDEEEDQE) shows a compositional bias: acidic residues.

This sequence belongs to the cyclin family. Cyclin AB subfamily.

Essential for the control of the cell cycle at the G2/M (mitosis) transition. Interacts with the CDC2 protein kinase to form MPF. G2/M cyclins accumulate steadily during G2 and are abruptly destroyed at mitosis. The protein is G2/mitotic-specific cyclin-3 (CLB3) of Saccharomyces cerevisiae (strain ATCC 204508 / S288c) (Baker's yeast).